The primary structure comprises 480 residues: MEVAPEQPRWMAHPAVLNAQHPDSHHPGLAHNYMEPAQLLPPDEVDVFFNHLDSQGNPYYANPAHARARVSYSPAHARLTGGQMCRPHLLHSPGLPWLDGGKAALSAAAAHHHNPWTVSPFSKTPLHPSAAGGPGGPLSVYPGAGGGSGGGSGSSVASLTPTAAHSGSHLFGFPPTPPKEVSPDPSTTGAASPASSSAGGSAARGEDKDGVKYQVSLTESMKMESGSPLRPGLATMGTQPATHHPIPTYPSYVPAAAHDYSSGLFHPGGFLGGPASSFTPKQRSKARSCSEGRECVNCGATATPLWRRDGTGHYLCNACGLYHKMNGQNRPLIKPKRRLSAARRAGTCCANCQTTTTTLWRRNANGDPVCNACGLYYKLHNVNRPLTMKKEGIQTRNRKMSNKSKKSKKGAECFEELSKCMQEKSSPFSAAALAGHMAPVGHLPPFSHSGHILPTPTPIHPSSSLSFGHPHPSSMVTAMG.

Position 73 is a phosphoserine (Ser73). Arg86 carries the post-translational modification Asymmetric dimethylarginine. Residues 119–209 (SPFSKTPLHP…GSAARGEDKD (91 aa)) are disordered. Residues 143–153 (GAGGGSGGGSG) are compositionally biased toward gly residues. Residues 185-203 (PSTTGAASPASSSAGGSAA) are compositionally biased toward low complexity. A Phosphoserine modification is found at Ser192. 2 GATA-type zinc fingers span residues 295 to 319 (CVNC…CNAC) and 349 to 373 (CANC…CNAC). Residue Lys389 forms a Glycyl lysine isopeptide (Lys-Gly) (interchain with G-Cter in SUMO2) linkage. The interval 448–480 (HSGHILPTPTPIHPSSSLSFGHPHPSSMVTAMG) is disordered.

Interacts with BRD3. Interacts with AR and CCAR1. Interacts with MDFIC. As to expression, endothelial cells.

It is found in the nucleus. Transcriptional activator which regulates endothelin-1 gene expression in endothelial cells. Binds to the consensus sequence 5'-AGATAG-3'. The polypeptide is Endothelial transcription factor GATA-2 (GATA2) (Homo sapiens (Human)).